The chain runs to 1183 residues: DNA-directed RNA polymerase subunit beta (1183 aa).

It belongs to the RNA polymerase beta chain family. The RNAP catalytic core consists of 2 alpha, 1 beta, 1 beta' and 1 omega subunit. When a sigma factor is associated with the core the holoenzyme is formed, which can initiate transcription.

It catalyses the reaction RNA(n) + a ribonucleoside 5'-triphosphate = RNA(n+1) + diphosphate. Functionally, DNA-dependent RNA polymerase catalyzes the transcription of DNA into RNA using the four ribonucleoside triphosphates as substrates. This is DNA-directed RNA polymerase subunit beta from Staphylococcus aureus (strain Mu50 / ATCC 700699).